A 288-amino-acid chain; its full sequence is Mortality factor 4-like protein 2 (288 aa).

Polar residues predominate over residues 1–15 (MSSRKQGSQPRGQQS). The interval 1–113 (MSSRKQGSQP…RADPTVESEE (113 aa)) is disordered. Residue serine 71 is modified to Phosphoserine. An MRG domain is found at 117-288 (NRMEVKVKIP…ASAEYHRKAL (172 aa)).

As to quaternary structure, component of the NuA4 histone acetyltransferase complex which contains the catalytic subunit KAT5/TIP60 and the subunits EP400, TRRAP/PAF400, BRD8/SMAP, EPC1, DMAP1/DNMAP1, RUVBL1/TIP49, RUVBL2, ING3, actin, ACTL6A/BAF53A, MORF4L1/MRG15, MORF4L2/MRGX, MRGBP, YEATS4/GAS41 and VPS72/YL1. The NuA4 complex interacts with MYC and the adenovirus E1A protein. MORF4L1 may also participate in the formation of NuA4 related complexes which lack the KAT5/TIP60 catalytic subunit, but which include the SWI/SNF related protein SRCAP. Component of the MSIN3A histone deacetylase complex, which includes SIN3A, HDAC2, ARID4B, MORF4L1, RBBP4/RbAp48, and RBBP7/RbAp46. Interacts with MRFAP1 and RB1. May also interact with one or more as yet undefined members of the TLE (transducin-like enhancer of split) family of transcriptional repressors.

The protein localises to the nucleus. Functionally, component of the NuA4 histone acetyltransferase complex which is involved in transcriptional activation of select genes principally by acetylation of nucleosomal histone H4 and H2A. This modification may both alter nucleosome - DNA interactions and promote interaction of the modified histones with other proteins which positively regulate transcription. This complex may be required for the activation of transcriptional programs associated with oncogene and proto-oncogene mediated growth induction, tumor suppressor mediated growth arrest and replicative senescence, apoptosis, and DNA repair. The NuA4 complex ATPase and helicase activities seem to be, at least in part, contributed by the association of RUVBL1 and RUVBL2 with EP400. NuA4 may also play a direct role in DNA repair when directly recruited to sites of DNA damage. Also a component of the MSIN3A complex which acts to repress transcription by deacetylation of nucleosomal histones. This Macaca fascicularis (Crab-eating macaque) protein is Mortality factor 4-like protein 2 (MORF4L2).